Here is a 384-residue protein sequence, read N- to C-terminus: Succinyl-diaminopimelate desuccinylase (384 aa).

His-71 serves as a coordination point for Zn(2+). Asp-73 is an active-site residue. Position 104 (Asp-104) interacts with Zn(2+). Residue Glu-139 is the Proton acceptor of the active site. Zn(2+) is bound by residues Glu-140, Glu-168, and His-357.

This sequence belongs to the peptidase M20A family. DapE subfamily. As to quaternary structure, homodimer. Requires Zn(2+) as cofactor. The cofactor is Co(2+).

It carries out the reaction N-succinyl-(2S,6S)-2,6-diaminopimelate + H2O = (2S,6S)-2,6-diaminopimelate + succinate. The protein operates within amino-acid biosynthesis; L-lysine biosynthesis via DAP pathway; LL-2,6-diaminopimelate from (S)-tetrahydrodipicolinate (succinylase route): step 3/3. Functionally, catalyzes the hydrolysis of N-succinyl-L,L-diaminopimelic acid (SDAP), forming succinate and LL-2,6-diaminopimelate (DAP), an intermediate involved in the bacterial biosynthesis of lysine and meso-diaminopimelic acid, an essential component of bacterial cell walls. This is Succinyl-diaminopimelate desuccinylase from Bradyrhizobium sp. (strain BTAi1 / ATCC BAA-1182).